Reading from the N-terminus, the 90-residue chain is Small ribosomal subunit protein bS20 (90 aa).

The segment covering Met-1–Ser-10 has biased composition (polar residues). Residues Met-1–Lys-25 form a disordered region.

The protein belongs to the bacterial ribosomal protein bS20 family.

Functionally, binds directly to 16S ribosomal RNA. The protein is Small ribosomal subunit protein bS20 of Orientia tsutsugamushi (strain Boryong) (Rickettsia tsutsugamushi).